Here is a 393-residue protein sequence, read N- to C-terminus: Sugar efflux transporter A (393 aa).

Helical transmembrane passes span 22 to 42, 51 to 71, 82 to 102, 107 to 127, 152 to 172, 174 to 194, 219 to 239, 253 to 273, 287 to 307, 308 to 328, 344 to 364, and 366 to 386; these read VIAF…SLFL, FMVG…SQIL, KTLI…YAWN, VLLF…PQLF, ISLS…GFGF, AMYL…WLLL, LLLF…LINM, LAGV…LLAG, LAVI…GSWA, LLAL…MGML, LFTN…GIVA, and VWSY…AAVC.

It belongs to the major facilitator superfamily. Set transporter family.

The protein localises to the cell inner membrane. Involved in the efflux of sugars. The physiological role may be the reduction of the intracellular concentration of toxic sugars or sugar metabolites. Transports IPTG, lactose and arabinose. The chain is Sugar efflux transporter A (sotA) from Dickeya chrysanthemi (Pectobacterium chrysanthemi).